The primary structure comprises 544 residues: Chaperonin GroEL (544 aa).

ATP contacts are provided by residues 29 to 32 (TLGP), K50, 86 to 90 (DGTTT), G413, 479 to 481 (DAA), and D495.

Belongs to the chaperonin (HSP60) family. As to quaternary structure, forms a cylinder of 14 subunits composed of two heptameric rings stacked back-to-back. Interacts with the co-chaperonin GroES.

It is found in the cytoplasm. The catalysed reaction is ATP + H2O + a folded polypeptide = ADP + phosphate + an unfolded polypeptide.. Functionally, together with its co-chaperonin GroES, plays an essential role in assisting protein folding. The GroEL-GroES system forms a nano-cage that allows encapsulation of the non-native substrate proteins and provides a physical environment optimized to promote and accelerate protein folding. In Borrelia turicatae (strain 91E135), this protein is Chaperonin GroEL.